An 87-amino-acid chain; its full sequence is Cell division topological specificity factor (87 aa).

It belongs to the MinE family.

In terms of biological role, prevents the cell division inhibition by proteins MinC and MinD at internal division sites while permitting inhibition at polar sites. This ensures cell division at the proper site by restricting the formation of a division septum at the midpoint of the long axis of the cell. This is Cell division topological specificity factor from Vibrio vulnificus (strain CMCP6).